Here is a 380-residue protein sequence, read N- to C-terminus: Alpha-N-acetylneuraminate alpha-2,8-sialyltransferase ST8SIA3 (380 aa).

Residues 1 to 17 are Cytoplasmic-facing; sequence MRNCKMARVASVLGLVM. A helical; Signal-anchor for type II membrane protein membrane pass occupies residues 18–33; sequence LSVALLILSLISYVSL. The Lumenal portion of the chain corresponds to 34 to 380; the sequence is KKENIFTTPK…LTKLTLSHCA (347 aa). N-linked (GlcNAc...) asparagine glycans are attached at residues N93 and N113. 2 disulfide bridges follow: C162–C313 and C176–C379. The CMP-N-acetyl-beta-neuraminate site is built by N167 and N190. A glycan (N-linked (GlcNAc...) asparagine) is linked at N206. Positions 300, 301, 302, 322, 336, and 337 each coordinate CMP-N-acetyl-beta-neuraminate. H354 functions as the Proton donor/acceptor in the catalytic mechanism.

The protein belongs to the glycosyltransferase 29 family. In terms of assembly, homodimer. Expressed in neurons in brain with higher expression in the striatum than in the hippocampus, cortex, and cerebellum (at protein level). Expressed in testes.

It localises to the golgi apparatus membrane. The catalysed reaction is a ganglioside GM3 (d18:1(4E)) + CMP-N-acetyl-beta-neuraminate = a ganglioside GD3 (d18:1(4E)) + CMP + H(+). It carries out the reaction a ganglioside GM3 + CMP-N-acetyl-beta-neuraminate = a ganglioside GD3 + CMP + H(+). It catalyses the reaction an N-acetyl-alpha-neuraminyl-(2-&gt;3)-beta-D-galactosyl derivative + CMP-N-acetyl-beta-neuraminate = an N-acetyl-alpha-neuraminyl-(2-&gt;8)-N-acetyl-alpha-neuraminyl-(2-&gt;3)-beta-D-galactosyl derivative + CMP + H(+). The enzyme catalyses an N-acetyl-alpha-neuraminyl-(2-&gt;3)-beta-D-galactosyl-(1-&gt;4)-N-acetyl-beta-D-glucosaminyl derivative + CMP-N-acetyl-beta-neuraminate = an alpha-Neu5Ac-(2-&gt;8)-alpha-Neu5Ac-(2-&gt;3)-beta-D-Gal-(1-&gt;4)-beta-D-GlcNAc derivative + CMP + H(+). The protein operates within protein modification; protein glycosylation. Catalyzes the transfer of sialic acid from a CMP-linked sialic acid donor onto a terminal alpha-2,3-, alpha-2,6-, or alpha-2,8-linked sialic acid of an acceptor, such as N-linked oligosaccharides of glycoproteins and glycolipids through alpha-2,8-linkages. Forms oligosialic and polysialic acid on various sialylated N-acetyllactosamine oligosaccharides of glycoproteins, including FETUB N-glycans, a2-HS-glycoprotein (AHSG) and alpha 2,3-sialylated glycosphingolipids, such as alpha 2,3-sialylparagloboside and ganglioside GM3 and to a lesser extent NCAM1 N-glycans. However, it is much more specific to N-linked oligosaccharides of glycoproteins than glycosphingolipids. 2,3-sialylparagloboside served as the best acceptor substrate among the glycolipids. alpha-Neu5Ac-(2-&gt;8)-alpha-Neu5Ac-(2-&gt;3)-beta-D-Gal-(1-&gt;4)-6S-D-GlcNAc and monosialyl and disialyl N-acetyllactosamines are the best acceptor substrates among glycoproteins. May play critical role in the striatum by mediating the formation of disialylated and trisialylated terminal glycotopes on N- and O-glycans of specific striatal proteins, regulating their distribution in lipid rafts, affecting their interaction with other binding partners, and subsequently modulating striatal functions. This Mus musculus (Mouse) protein is Alpha-N-acetylneuraminate alpha-2,8-sialyltransferase ST8SIA3.